The following is a 388-amino-acid chain: MKIHEYQGKEILRKFGVAVPRGKPAFSVDEAVKVAEELGGPVWVVKAQIHAGGRGKGGGVKVAKSIEQVREYANQILGMQLVTHQTGPEGQKVNRLMVEEGADIKQELYVSLVVDRVTQKIVLMGSSEGGMDIEEVAEKHPELIHKVIVEPSTGLLDAQADDLAAKIGVPAASIPQARAILQGLYKAFWETDASLAEINPLNVSSDGKVIALDAKFNFDSNALFRHPEIVAYRDLDEEDPAEIEASKFDLAYISLDGNIGCLVNGAGLAMATMDTIKLFGGEPANFLDVGGGATTEKVTEAFKLMLKNPDLKAILVNIFGGIMRCDVIAEGVIAGSKAVNLNVPLVVRMKGTNEDLGKKMLADSGLPIISADSMEEAAQKVVAAAAGK.

In terms of domain architecture, ATP-grasp spans 9 to 244 (KEILRKFGVA…LDEEDPAEIE (236 aa)). Residues K46, 53-55 (GRG), E99, A102, and E107 contribute to the ATP site. Mg(2+) is bound by residues N199 and D213. Residues N264 and 321-323 (GIM) contribute to the substrate site.

Belongs to the succinate/malate CoA ligase beta subunit family. Heterotetramer of two alpha and two beta subunits. The cofactor is Mg(2+).

The enzyme catalyses succinate + ATP + CoA = succinyl-CoA + ADP + phosphate. The catalysed reaction is GTP + succinate + CoA = succinyl-CoA + GDP + phosphate. Its pathway is carbohydrate metabolism; tricarboxylic acid cycle; succinate from succinyl-CoA (ligase route): step 1/1. Functionally, succinyl-CoA synthetase functions in the citric acid cycle (TCA), coupling the hydrolysis of succinyl-CoA to the synthesis of either ATP or GTP and thus represents the only step of substrate-level phosphorylation in the TCA. The beta subunit provides nucleotide specificity of the enzyme and binds the substrate succinate, while the binding sites for coenzyme A and phosphate are found in the alpha subunit. In Burkholderia lata (strain ATCC 17760 / DSM 23089 / LMG 22485 / NCIMB 9086 / R18194 / 383), this protein is Succinate--CoA ligase [ADP-forming] subunit beta.